The sequence spans 360 residues: NAD(P)H-quinone oxidoreductase subunit 1, chloroplastic (360 aa).

9 helical membrane-spanning segments follow: residues 27-47 (IWIFVPIFSLVLGIITGVLVI), 98-118 (FSIGPSIAVISILLSYSVIPF), 129-149 (IGIFLWIAISSIAPIGLLMSG), 165-185 (AAQSISYEIPLTLCVLSISLL), 203-223 (FWGWNLWRQPIGFIIFLISSL), 248-268 (YSGIKFGLFYVASYLNLLISS), 269-289 (LFVTVLYLGGWNISIPYISIL), 297-317 (IFGTTICIFITLAKTYLFLFI), and 340-360 (FLLPISLGNLLLTTSFQLFSL).

This sequence belongs to the complex I subunit 1 family. As to quaternary structure, NDH is composed of at least 16 different subunits, 5 of which are encoded in the nucleus.

It localises to the plastid. It is found in the chloroplast thylakoid membrane. It catalyses the reaction a plastoquinone + NADH + (n+1) H(+)(in) = a plastoquinol + NAD(+) + n H(+)(out). It carries out the reaction a plastoquinone + NADPH + (n+1) H(+)(in) = a plastoquinol + NADP(+) + n H(+)(out). Functionally, NDH shuttles electrons from NAD(P)H:plastoquinone, via FMN and iron-sulfur (Fe-S) centers, to quinones in the photosynthetic chain and possibly in a chloroplast respiratory chain. The immediate electron acceptor for the enzyme in this species is believed to be plastoquinone. Couples the redox reaction to proton translocation, and thus conserves the redox energy in a proton gradient. The protein is NAD(P)H-quinone oxidoreductase subunit 1, chloroplastic of Olimarabidopsis pumila (Dwarf rocket).